The following is a 448-amino-acid chain: Cysteine--tRNA ligase (448 aa).

Zn(2+) is bound at residue C27. Residues 29 to 39 (PTVYNYIHVGN) carry the 'HIGH' region motif. Positions 210, 235, and 239 each coordinate Zn(2+). Positions 267–271 (KMSKS) match the 'KMSKS' region motif. K270 lines the ATP pocket.

Belongs to the class-I aminoacyl-tRNA synthetase family. Monomer. It depends on Zn(2+) as a cofactor.

The protein localises to the cytoplasm. The catalysed reaction is tRNA(Cys) + L-cysteine + ATP = L-cysteinyl-tRNA(Cys) + AMP + diphosphate. The sequence is that of Cysteine--tRNA ligase from Lactococcus lactis subsp. lactis (strain IL1403) (Streptococcus lactis).